The sequence spans 270 residues: MRLIIQPDYQSVSQWAAHYVAAKIKAANPTPEKPFVLGCPTGSSPLGMYKALIDLNKKGIVSFQNVVTFNMDEYVGLPKEHPESYYSFMWNNFFSHIDIKPENTNILNGNAADLDAECARYEEKIKSYGGIDLFMGGIGPDGHIAFNEPGSSLSSRTRQKTLTTDTIIANSRFFDNDINKVPKTSLTVGVGTVLSAREVMIIVNGHNKARALYHAVEGAITQMWTISALQMHEKGIIVCDDAATAELKVGTYRYFKDIEADHLDPQSLLK.

The active-site Proton acceptor; for enolization step is Asp-72. Asp-141 serves as the catalytic For ring-opening step. His-143 acts as the Proton acceptor; for ring-opening step in catalysis. The active-site For ring-opening step is the Glu-148.

The protein belongs to the glucosamine/galactosamine-6-phosphate isomerase family. NagB subfamily.

The catalysed reaction is alpha-D-glucosamine 6-phosphate + H2O = beta-D-fructose 6-phosphate + NH4(+). It participates in amino-sugar metabolism; N-acetylneuraminate degradation; D-fructose 6-phosphate from N-acetylneuraminate: step 5/5. With respect to regulation, allosterically activated by N-acetylglucosamine 6-phosphate (GlcNAc6P). Functionally, catalyzes the reversible isomerization-deamination of glucosamine 6-phosphate (GlcN6P) to form fructose 6-phosphate (Fru6P) and ammonium ion. This Bacteroides fragilis (strain ATCC 25285 / DSM 2151 / CCUG 4856 / JCM 11019 / LMG 10263 / NCTC 9343 / Onslow / VPI 2553 / EN-2) protein is Glucosamine-6-phosphate deaminase.